A 636-amino-acid chain; its full sequence is 3-phosphoinositide-dependent protein kinase 1 (636 aa).

Composition is skewed to low complexity over residues 1 to 20 (MEDL…NNDT) and 27 to 37 (APTTLNLTPTA). Positions 1–45 (MEDLTPTNTSLDTTTTNNDTTSDREAAPTTLNLTPTASESENSLS) are disordered. The Protein kinase domain occupies 69 to 364 (FMFLQSMGEG…SQELMAHKFF (296 aa)). ATP contacts are provided by residues 79–81 (AYS) and Lys-98. Positions 100 to 149 (LQKSYLNRHQKMDAIIREKNILTYLSQECGGHPFVTQLYTHFHDQARIYF) are PIF-pocket. Residues 152–154 (GLV) and Asp-158 contribute to the ATP site. Catalysis depends on Asp-197, which acts as the Proton acceptor. ATP contacts are provided by Asp-201 and Asp-215. Disordered stretches follow at residues 233-264 (TDAN…EENT) and 593-636 (KKSR…KKSP). A coiled-coil region spans residues 550-631 (DLEKKADEWC…QVSKKLSMQM (82 aa)). The span at 597 to 624 (KEMMREQKALRRKQEKEEKKALKAEQVS) shows a compositional bias: basic and acidic residues.

This sequence belongs to the protein kinase superfamily. AGC Ser/Thr protein kinase family. PDPK1 subfamily. In terms of assembly, interacts directly with sgk-1, akt-1 and akt-2.

Its subcellular location is the cytoplasm. It catalyses the reaction L-seryl-[protein] + ATP = O-phospho-L-seryl-[protein] + ADP + H(+). The enzyme catalyses L-threonyl-[protein] + ATP = O-phospho-L-threonyl-[protein] + ADP + H(+). Functionally, involved in the daf-2/insulin receptor-like transduction pathway, which controls longevity and prevents developmental arrest at the dauer stage. Phosphorylates and activates sgk-1, akt-1 and akt-2. The protein is 3-phosphoinositide-dependent protein kinase 1 of Caenorhabditis elegans.